A 331-amino-acid polypeptide reads, in one-letter code: FMRFamide-related neuropeptides (331 aa).

The first 25 residues, 1–25 (MRCWSPCSLLVVIVIYCLSSHTSEA), serve as a signal peptide directing secretion. The propeptide occupies 26 to 65 (FDLAQACVESQRLSLLPICDTIFAVQQEGVQQSADDGMRS). 2 positions are modified to phenylalanine amide: phenylalanine 71 and phenylalanine 83. Residues 86–94 (NVPDLPFED) constitute a propeptide that is removed on maturation. Phenylalanine 100 bears the Phenylalanine amide mark. Residues 103 to 168 (AAPQLDELLK…YIDDVEDSDV (66 aa)) constitute a propeptide that is removed on maturation. The tract at residues 122 to 158 (QKADETSVRRKRSTDAAPQNNAENPEQKNDSAKITKR) is disordered. Over residues 146–158 (PEQKNDSAKITKR) the composition is skewed to basic and acidic residues. A phenylalanine amide mark is found at phenylalanine 174 and phenylalanine 181. Positions 184 to 194 (NPSDVGNKLTE) are excised as a propeptide. Phenylalanine 200 carries the phenylalanine amide modification. Positions 203–205 (DPE) are excised as a propeptide. Phenylalanine 211 is subject to Phenylalanine amide. Residues 214–216 (SDD) constitute a propeptide that is removed on maturation. Position 222 is a phenylalanine amide (phenylalanine 222). Positions 225-236 (NPSDAEDELEED) are excised as a propeptide. Position 242 is a phenylalanine amide (phenylalanine 242). The propeptide occupies 245-254 (GGEDDEEEAE). Phenylalanine 260 bears the Phenylalanine amide mark. A propeptide spanning residues 263–265 (DPE) is cleaved from the precursor. Phenylalanine amide is present on phenylalanine 271. Residues 274–277 (SGED) constitute a propeptide that is removed on maturation. A compositionally biased stretch (basic and acidic residues) spans 279–296 (RFMRFGRNPDEQEADKRF). The tract at residues 279 to 310 (RFMRFGRNPDEQEADKRFMRFGRGGEDDEVST) is disordered. Phenylalanine 283 bears the Phenylalanine amide mark. Residues 286–293 (NPDEQEAD) constitute a propeptide that is removed on maturation. Phenylalanine 299 carries the phenylalanine amide modification. Positions 302–312 (GGEDDEVSTED) are excised as a propeptide. Phenylalanine 318 carries the post-translational modification Phenylalanine amide. A propeptide spanning residues 321–331 (SADKCKGCLEG) is cleaved from the precursor.

Belongs to the FARP (FMRFamide related peptide) family.

The protein localises to the secreted. Its function is as follows. Excitatory neurotransmitters that directly modulate chromatophore function by activating chromatophore expansion at the chromatophore neuromuscular junction. The protein is FMRFamide-related neuropeptides of Doryteuthis opalescens (California market squid).